Consider the following 33-residue polypeptide: Ranatuerin-1T (33 aa).

A disulfide bridge connects residues Cys-27 and Cys-33.

Expressed by the skin glands.

It localises to the secreted. In terms of biological role, antibacterial activity against Gram-positive bacterium S.aureus and Gram-negative bacterium E.coli. No activity against C.albicans. The protein is Ranatuerin-1T of Rana temporaria (European common frog).